A 242-amino-acid polypeptide reads, in one-letter code: tRNA pseudouridine synthase A (242 aa).

Catalysis depends on Asp51, which acts as the Nucleophile. A substrate-binding site is contributed by Tyr107.

The protein belongs to the tRNA pseudouridine synthase TruA family. In terms of assembly, homodimer.

The catalysed reaction is uridine(38/39/40) in tRNA = pseudouridine(38/39/40) in tRNA. Its function is as follows. Formation of pseudouridine at positions 38, 39 and 40 in the anticodon stem and loop of transfer RNAs. This is tRNA pseudouridine synthase A from Helicobacter pylori (strain Shi470).